The primary structure comprises 327 residues: Fe-S cluster assembly protein DRE2 (327 aa).

The span at M1 to F14 shows a compositional bias: polar residues. Disordered stretches follow at residues M1–P20 and N153–A179. The N-terminal SAM-like domain stretch occupies residues G17–V144. Positions P145–L214 are linker. Low complexity predominate over residues P164–A179. Positions 224, 235, 238, and 240 each coordinate [2Fe-2S] cluster. A fe-S binding site A region spans residues C224–C240. Residues C290, C293, C301, and C304 each contribute to the [4Fe-4S] cluster site. 2 consecutive short sequence motifs (cx2C motif) follow at residues C290–C293 and C301–C304. Residues C290 to C304 form a fe-S binding site B region.

It belongs to the anamorsin family. In terms of assembly, monomer. Interacts with TAH18. Interacts with MIA40. Requires [2Fe-2S] cluster as cofactor. It depends on [4Fe-4S] cluster as a cofactor.

It is found in the cytoplasm. Its subcellular location is the mitochondrion intermembrane space. Functionally, component of the cytosolic iron-sulfur (Fe-S) protein assembly (CIA) machinery required for the maturation of extramitochondrial Fe-S proteins. Part of an electron transfer chain functioning in an early step of cytosolic Fe-S biogenesis, facilitating the de novo assembly of a [4Fe-4S] cluster on the scaffold complex CFD1-NBP35. Electrons are transferred to DRE2 from NADPH via the FAD- and FMN-containing protein TAH18. TAH18-DRE2 are also required for the assembly of the diferric tyrosyl radical cofactor of ribonucleotide reductase (RNR), probably by providing electrons for reduction during radical cofactor maturation in the catalytic small subunit RNR2. The polypeptide is Fe-S cluster assembly protein DRE2 (Pyricularia oryzae (strain 70-15 / ATCC MYA-4617 / FGSC 8958) (Rice blast fungus)).